A 311-amino-acid polypeptide reads, in one-letter code: Nucleotide-binding protein Acel_1111 (311 aa).

30–37 (GLSGAGRS) contacts ATP. 81-84 (DVRS) provides a ligand contact to GTP.

Belongs to the RapZ-like family.

In terms of biological role, displays ATPase and GTPase activities. The chain is Nucleotide-binding protein Acel_1111 from Acidothermus cellulolyticus (strain ATCC 43068 / DSM 8971 / 11B).